A 361-amino-acid polypeptide reads, in one-letter code: tRNA-specific 2-thiouridylase MnmA (361 aa).

ATP contacts are provided by residues 6 to 13 (LVSGGVDS) and Ile32. The segment at 93–95 (NPD) is interaction with target base in tRNA. Cys98 (nucleophile) is an active-site residue. A disulfide bridge connects residues Cys98 and Cys193. Residue Gly121 coordinates ATP. The tract at residues 143–145 (KDQ) is interaction with tRNA. Cys193 (cysteine persulfide intermediate) is an active-site residue.

This sequence belongs to the MnmA/TRMU family.

It localises to the cytoplasm. It catalyses the reaction S-sulfanyl-L-cysteinyl-[protein] + uridine(34) in tRNA + AH2 + ATP = 2-thiouridine(34) in tRNA + L-cysteinyl-[protein] + A + AMP + diphosphate + H(+). Catalyzes the 2-thiolation of uridine at the wobble position (U34) of tRNA, leading to the formation of s(2)U34. The chain is tRNA-specific 2-thiouridylase MnmA from Porphyromonas gingivalis (strain ATCC BAA-308 / W83).